The sequence spans 179 residues: MAELATIARPYAEALFGVAEAGDIAAWSTLVQELAQVARLPEVLSIASSPKVSRAQVSELLLAAVKSPLKDNAQAKNLVQMLVDNHRLQLLPEIAVQFEELKNAREGAADVLIVSAFPLEGAQLNDLVASLERKFKRKLKPTVEIDPSLIGGVRVTVGDEVLDTSVRARLASMQTALTA.

Belongs to the ATPase delta chain family. As to quaternary structure, F-type ATPases have 2 components, F(1) - the catalytic core - and F(0) - the membrane proton channel. F(1) has five subunits: alpha(3), beta(3), gamma(1), delta(1), epsilon(1). F(0) has three main subunits: a(1), b(2) and c(10-14). The alpha and beta chains form an alternating ring which encloses part of the gamma chain. F(1) is attached to F(0) by a central stalk formed by the gamma and epsilon chains, while a peripheral stalk is formed by the delta and b chains.

It localises to the cell inner membrane. Its function is as follows. F(1)F(0) ATP synthase produces ATP from ADP in the presence of a proton or sodium gradient. F-type ATPases consist of two structural domains, F(1) containing the extramembraneous catalytic core and F(0) containing the membrane proton channel, linked together by a central stalk and a peripheral stalk. During catalysis, ATP synthesis in the catalytic domain of F(1) is coupled via a rotary mechanism of the central stalk subunits to proton translocation. This protein is part of the stalk that links CF(0) to CF(1). It either transmits conformational changes from CF(0) to CF(1) or is implicated in proton conduction. This chain is ATP synthase subunit delta, found in Paraburkholderia phytofirmans (strain DSM 17436 / LMG 22146 / PsJN) (Burkholderia phytofirmans).